Reading from the N-terminus, the 37-residue chain is Cytochrome b6-f complex subunit 5 (37 aa).

The chain crosses the membrane as a helical span at residues 5 to 25 (FLFGIVLGLIPITLAGLFVTA).

This sequence belongs to the PetG family. As to quaternary structure, the 4 large subunits of the cytochrome b6-f complex are cytochrome b6, subunit IV (17 kDa polypeptide, PetD), cytochrome f and the Rieske protein, while the 4 small subunits are PetG, PetL, PetM and PetN. The complex functions as a dimer.

The protein localises to the plastid. It is found in the chloroplast thylakoid membrane. Its function is as follows. Component of the cytochrome b6-f complex, which mediates electron transfer between photosystem II (PSII) and photosystem I (PSI), cyclic electron flow around PSI, and state transitions. PetG is required for either the stability or assembly of the cytochrome b6-f complex. This is Cytochrome b6-f complex subunit 5 from Platanus occidentalis (Sycamore).